A 193-amino-acid chain; its full sequence is Peptidyl-tRNA hydrolase (193 aa).

Position 16 (Y16) interacts with tRNA. The active-site Proton acceptor is the H21. Positions 66, 68, and 114 each coordinate tRNA.

It belongs to the PTH family. In terms of assembly, monomer.

It is found in the cytoplasm. It catalyses the reaction an N-acyl-L-alpha-aminoacyl-tRNA + H2O = an N-acyl-L-amino acid + a tRNA + H(+). Functionally, hydrolyzes ribosome-free peptidyl-tRNAs (with 1 or more amino acids incorporated), which drop off the ribosome during protein synthesis, or as a result of ribosome stalling. Its function is as follows. Catalyzes the release of premature peptidyl moieties from peptidyl-tRNA molecules trapped in stalled 50S ribosomal subunits, and thus maintains levels of free tRNAs and 50S ribosomes. This chain is Peptidyl-tRNA hydrolase, found in Pelobacter propionicus (strain DSM 2379 / NBRC 103807 / OttBd1).